Reading from the N-terminus, the 599-residue chain is Elongation factor 4 (599 aa).

Positions 5 to 187 constitute a tr-type G domain; the sequence is SHIRNFSIVA…SIVQNLPAPK (183 aa). GTP-binding positions include 17–22 and 134–137; these read DHGKST and NKID.

This sequence belongs to the TRAFAC class translation factor GTPase superfamily. Classic translation factor GTPase family. LepA subfamily.

The protein localises to the cell inner membrane. It catalyses the reaction GTP + H2O = GDP + phosphate + H(+). Required for accurate and efficient protein synthesis under certain stress conditions. May act as a fidelity factor of the translation reaction, by catalyzing a one-codon backward translocation of tRNAs on improperly translocated ribosomes. Back-translocation proceeds from a post-translocation (POST) complex to a pre-translocation (PRE) complex, thus giving elongation factor G a second chance to translocate the tRNAs correctly. Binds to ribosomes in a GTP-dependent manner. The chain is Elongation factor 4 from Roseobacter denitrificans (strain ATCC 33942 / OCh 114) (Erythrobacter sp. (strain OCh 114)).